Here is a 518-residue protein sequence, read N- to C-terminus: Probable protein phosphatase 2C 14 (518 aa).

2 stretches are compositionally biased toward low complexity: residues 1 to 10 (MVEAAAGRRS) and 86 to 105 (PQRQ…APGA). Disordered stretches follow at residues 1 to 31 (MVEA…QQHQ) and 86 to 108 (PQRQ…ADGR). The region spanning 129 to 437 (VASLYTLQGK…DDCAVVCLFL (309 aa)) is the PPM-type phosphatase domain. The Mn(2+) site is built by Asp165 and Gly166. Residues 192 to 222 (TDEGRQTSTSSIKSNGDETGSPGNMGRDAEQ) are disordered. The span at 197 to 213 (QTSTSSIKSNGDETGSP) shows a compositional bias: polar residues. Residues Asp382 and Asp428 each contribute to the Mn(2+) site.

It belongs to the PP2C family. The cofactor is Mg(2+). Mn(2+) is required as a cofactor.

It catalyses the reaction O-phospho-L-seryl-[protein] + H2O = L-seryl-[protein] + phosphate. The catalysed reaction is O-phospho-L-threonyl-[protein] + H2O = L-threonyl-[protein] + phosphate. This Oryza sativa subsp. japonica (Rice) protein is Probable protein phosphatase 2C 14.